The chain runs to 133 residues: Putative biopolymer transport protein ExbD-like 1 (133 aa).

Residues 1–15 (MNYDNYWDEDKPELN) are Cytoplasmic-facing. A helical transmembrane segment spans residues 16–32 (ITPLVDVMLVLLAILMV). Over 33–133 (TTPTLTYKEE…FLKVSLITSP (101 aa)) the chain is Periplasmic.

Belongs to the ExbD/TolR family.

It localises to the cell inner membrane. In Helicobacter pylori (strain ATCC 700392 / 26695) (Campylobacter pylori), this protein is Putative biopolymer transport protein ExbD-like 1.